A 450-amino-acid chain; its full sequence is D-inositol 3-phosphate glycosyltransferase (450 aa).

Histidine 21 provides a ligand contact to 1D-myo-inositol 3-phosphate. UDP-N-acetyl-alpha-D-glucosamine contacts are provided by residues glutamine 27–proline 28 and glycine 35. 1D-myo-inositol 3-phosphate contacts are provided by residues aspartate 32–asparagine 37, lysine 90, tyrosine 123, threonine 147, and arginine 167. Residues arginine 241, lysine 246, and valine 307 each contribute to the UDP-N-acetyl-alpha-D-glucosamine site. Mg(2+) is bound by residues tyrosine 316, arginine 317, and alanine 319. The UDP-N-acetyl-alpha-D-glucosamine site is built by glutamate 329 and glutamate 337. Threonine 343 provides a ligand contact to Mg(2+).

It belongs to the glycosyltransferase group 1 family. MshA subfamily. As to quaternary structure, homodimer.

The catalysed reaction is 1D-myo-inositol 3-phosphate + UDP-N-acetyl-alpha-D-glucosamine = 1D-myo-inositol 2-acetamido-2-deoxy-alpha-D-glucopyranoside 3-phosphate + UDP + H(+). Functionally, catalyzes the transfer of a N-acetyl-glucosamine moiety to 1D-myo-inositol 3-phosphate to produce 1D-myo-inositol 2-acetamido-2-deoxy-glucopyranoside 3-phosphate in the mycothiol biosynthesis pathway. The protein is D-inositol 3-phosphate glycosyltransferase of Geodermatophilus obscurus (strain ATCC 25078 / DSM 43160 / JCM 3152 / CCUG 61914 / KCC A-0152 / KCTC 9177 / NBRC 13315 / NRRL B-3577 / G-20).